The sequence spans 375 residues: Succinyl-diaminopimelate desuccinylase (375 aa).

His-66 contacts Zn(2+). Asp-68 is an active-site residue. Asp-99 contacts Zn(2+). The active-site Proton acceptor is the Glu-133. Glu-134, Glu-162, and His-348 together coordinate Zn(2+).

It belongs to the peptidase M20A family. DapE subfamily. As to quaternary structure, homodimer. Zn(2+) serves as cofactor. It depends on Co(2+) as a cofactor.

It catalyses the reaction N-succinyl-(2S,6S)-2,6-diaminopimelate + H2O = (2S,6S)-2,6-diaminopimelate + succinate. It functions in the pathway amino-acid biosynthesis; L-lysine biosynthesis via DAP pathway; LL-2,6-diaminopimelate from (S)-tetrahydrodipicolinate (succinylase route): step 3/3. In terms of biological role, catalyzes the hydrolysis of N-succinyl-L,L-diaminopimelic acid (SDAP), forming succinate and LL-2,6-diaminopimelate (DAP), an intermediate involved in the bacterial biosynthesis of lysine and meso-diaminopimelic acid, an essential component of bacterial cell walls. This Yersinia pseudotuberculosis serotype O:1b (strain IP 31758) protein is Succinyl-diaminopimelate desuccinylase.